We begin with the raw amino-acid sequence, 105 residues long: Met repressor (105 aa).

This sequence belongs to the MetJ family. As to quaternary structure, homodimer.

It localises to the cytoplasm. Its function is as follows. This regulatory protein, when combined with SAM (S-adenosylmethionine) represses the expression of the methionine regulon and of enzymes involved in SAM synthesis. The sequence is that of Met repressor from Photorhabdus laumondii subsp. laumondii (strain DSM 15139 / CIP 105565 / TT01) (Photorhabdus luminescens subsp. laumondii).